We begin with the raw amino-acid sequence, 250 residues long: MENIIVIKLGGTASDNLTENFFQKITEWQGAEKKIVLVHGGGHYITKMMEALQIPVETKNGLRITNQQALEVTKMVLIGQVQPTITSAFQKRGISVIGLNAGDTGLLEAERLNDRDLGLVGKITKVKTNLIEQLLAGNIITVIAPLGIDNTYNWLNVNADTAACEVASALKAEALYLLTDVPGVKNESEIISEINTTEINKLQTSGVIKGGMIPKLESAAFAAKHGVGQVIITDSLENAGTKIRSKVAIG.

Residues 41–42 (GG), R63, and N156 contribute to the substrate site.

The protein belongs to the acetylglutamate kinase family. ArgB subfamily.

The protein localises to the cytoplasm. The catalysed reaction is N-acetyl-L-glutamate + ATP = N-acetyl-L-glutamyl 5-phosphate + ADP. Its pathway is amino-acid biosynthesis; L-arginine biosynthesis; N(2)-acetyl-L-ornithine from L-glutamate: step 2/4. Catalyzes the ATP-dependent phosphorylation of N-acetyl-L-glutamate. This Listeria welshimeri serovar 6b (strain ATCC 35897 / DSM 20650 / CCUG 15529 / CIP 8149 / NCTC 11857 / SLCC 5334 / V8) protein is Acetylglutamate kinase.